The following is a 450-amino-acid chain: tRNA-2-methylthio-N(6)-dimethylallyladenosine synthase (450 aa).

Positions 14 to 132 (GEFFIETWGC…FPNYLNEVKK (119 aa)) constitute an MTTase N-terminal domain. Residues cysteine 23, cysteine 59, cysteine 93, cysteine 169, cysteine 173, and cysteine 176 each coordinate [4Fe-4S] cluster. In terms of domain architecture, Radical SAM core spans 155–385 (RKNSMKAFVT…VEVLNEISAK (231 aa)). One can recognise a TRAM domain in the interval 388–450 (KAYEGKIEEV…NSFSLTGEEI (63 aa)).

It belongs to the methylthiotransferase family. MiaB subfamily. As to quaternary structure, monomer. The cofactor is [4Fe-4S] cluster.

It is found in the cytoplasm. It carries out the reaction N(6)-dimethylallyladenosine(37) in tRNA + (sulfur carrier)-SH + AH2 + 2 S-adenosyl-L-methionine = 2-methylsulfanyl-N(6)-dimethylallyladenosine(37) in tRNA + (sulfur carrier)-H + 5'-deoxyadenosine + L-methionine + A + S-adenosyl-L-homocysteine + 2 H(+). Catalyzes the methylthiolation of N6-(dimethylallyl)adenosine (i(6)A), leading to the formation of 2-methylthio-N6-(dimethylallyl)adenosine (ms(2)i(6)A) at position 37 in tRNAs that read codons beginning with uridine. This chain is tRNA-2-methylthio-N(6)-dimethylallyladenosine synthase, found in Clostridium botulinum (strain ATCC 19397 / Type A).